A 252-amino-acid chain; its full sequence is Imidazole glycerol phosphate synthase subunit HisF (252 aa).

Active-site residues include D11 and D130.

Belongs to the HisA/HisF family. As to quaternary structure, heterodimer of HisH and HisF.

It localises to the cytoplasm. The catalysed reaction is 5-[(5-phospho-1-deoxy-D-ribulos-1-ylimino)methylamino]-1-(5-phospho-beta-D-ribosyl)imidazole-4-carboxamide + L-glutamine = D-erythro-1-(imidazol-4-yl)glycerol 3-phosphate + 5-amino-1-(5-phospho-beta-D-ribosyl)imidazole-4-carboxamide + L-glutamate + H(+). Its pathway is amino-acid biosynthesis; L-histidine biosynthesis; L-histidine from 5-phospho-alpha-D-ribose 1-diphosphate: step 5/9. In terms of biological role, IGPS catalyzes the conversion of PRFAR and glutamine to IGP, AICAR and glutamate. The HisF subunit catalyzes the cyclization activity that produces IGP and AICAR from PRFAR using the ammonia provided by the HisH subunit. In Aromatoleum aromaticum (strain DSM 19018 / LMG 30748 / EbN1) (Azoarcus sp. (strain EbN1)), this protein is Imidazole glycerol phosphate synthase subunit HisF.